A 435-amino-acid polypeptide reads, in one-letter code: Methylenetetrahydrofolate--tRNA-(uracil-5-)-methyltransferase TrmFO (435 aa).

Residue 9–14 (GAGLAG) participates in FAD binding.

Belongs to the MnmG family. TrmFO subfamily. Requires FAD as cofactor.

The protein localises to the cytoplasm. The enzyme catalyses uridine(54) in tRNA + (6R)-5,10-methylene-5,6,7,8-tetrahydrofolate + NADH + H(+) = 5-methyluridine(54) in tRNA + (6S)-5,6,7,8-tetrahydrofolate + NAD(+). It carries out the reaction uridine(54) in tRNA + (6R)-5,10-methylene-5,6,7,8-tetrahydrofolate + NADPH + H(+) = 5-methyluridine(54) in tRNA + (6S)-5,6,7,8-tetrahydrofolate + NADP(+). In terms of biological role, catalyzes the folate-dependent formation of 5-methyl-uridine at position 54 (M-5-U54) in all tRNAs. In Staphylococcus aureus (strain Newman), this protein is Methylenetetrahydrofolate--tRNA-(uracil-5-)-methyltransferase TrmFO.